Reading from the N-terminus, the 157-residue chain is Transcriptional repressor NrdR (157 aa).

A zinc finger lies at 3–34 (CPKCNSTHSRVVDSRHADEANAIRRRRECENC). Residues 49–139 (LIVVKKDGTR…VYKEFKDVDQ (91 aa)) form the ATP-cone domain.

It belongs to the NrdR family. Requires Zn(2+) as cofactor.

Negatively regulates transcription of bacterial ribonucleotide reductase nrd genes and operons by binding to NrdR-boxes. This chain is Transcriptional repressor NrdR, found in Staphylococcus carnosus (strain TM300).